The sequence spans 539 residues: CTP synthase (539 aa).

An amidoligase domain region spans residues 1 to 267 (MTKYIFVTGG…DQKVCDFLHI (267 aa)). CTP is bound at residue serine 13. UTP is bound at residue serine 13. 14 to 19 (SLGKGI) serves as a coordination point for ATP. Tyrosine 54 contributes to the L-glutamine binding site. ATP is bound at residue aspartate 71. The Mg(2+) site is built by aspartate 71 and glutamate 141. CTP contacts are provided by residues 148 to 150 (DME), 188 to 193 (KTKPTQ), and lysine 224. UTP contacts are provided by residues 188 to 193 (KTKPTQ) and lysine 224. The region spanning 294–537 (KITLVGKYVE…IGAASGLPEQ (244 aa)) is the Glutamine amidotransferase type-1 domain. Glycine 356 provides a ligand contact to L-glutamine. Cysteine 383 serves as the catalytic Nucleophile; for glutamine hydrolysis. Residues 384–387 (LGMQ), glutamate 407, and arginine 465 each bind L-glutamine. Catalysis depends on residues histidine 510 and glutamate 512.

This sequence belongs to the CTP synthase family. In terms of assembly, homotetramer.

The catalysed reaction is UTP + L-glutamine + ATP + H2O = CTP + L-glutamate + ADP + phosphate + 2 H(+). It catalyses the reaction L-glutamine + H2O = L-glutamate + NH4(+). It carries out the reaction UTP + NH4(+) + ATP = CTP + ADP + phosphate + 2 H(+). It functions in the pathway pyrimidine metabolism; CTP biosynthesis via de novo pathway; CTP from UDP: step 2/2. Its activity is regulated as follows. Allosterically activated by GTP, when glutamine is the substrate; GTP has no effect on the reaction when ammonia is the substrate. The allosteric effector GTP functions by stabilizing the protein conformation that binds the tetrahedral intermediate(s) formed during glutamine hydrolysis. Inhibited by the product CTP, via allosteric rather than competitive inhibition. In terms of biological role, catalyzes the ATP-dependent amination of UTP to CTP with either L-glutamine or ammonia as the source of nitrogen. Regulates intracellular CTP levels through interactions with the four ribonucleotide triphosphates. The protein is CTP synthase of Lactobacillus helveticus (strain DPC 4571).